The sequence spans 41 residues: Entericidin A (41 aa).

Positions 1–18 are cleaved as a signal peptide; the sequence is MMKRLIVLVLLASTLLTG. Residue C19 is the site of N-palmitoyl cysteine attachment. The S-diacylglycerol cysteine moiety is linked to residue C19.

The protein belongs to the EcnA/EcnB lipoprotein family.

It is found in the cell membrane. Functionally, acts as antidote to the effect of entericidin B. The polypeptide is Entericidin A (ecnA) (Escherichia coli O157:H7).